Here is a 304-residue protein sequence, read N- to C-terminus: Glutaminase (304 aa).

Residues S63, N114, E158, N165, Y189, Y240, and V258 each coordinate substrate.

This sequence belongs to the glutaminase family. Homotetramer.

The enzyme catalyses L-glutamine + H2O = L-glutamate + NH4(+). The polypeptide is Glutaminase (Shewanella amazonensis (strain ATCC BAA-1098 / SB2B)).